A 434-amino-acid polypeptide reads, in one-letter code: MTHNTDLNLPLFERAKALIPGGVNSPVRAFRAVGGTPRFITRAQGAYMWDANGQRFIDYIGSWGPMILGHGHPAVLEAVQKAALEGFSFGAPTEREVELAEEIIRHVPSMEMIRLVSSGTEAGMSAIRLARGATRRNKIIKFNGCYHGHADSLLVKAGSGLATFGHATSAGVPQEVVQHTLVLEYNDVAQLEEAFTLHGPDVACVIMEPIAGNMNFVRASVPFMRRARELCTQHGALLVIDEVMTGFRVALGGAQSLYAQAIPGFKPDITVLGKVIGGGMPLAAFGGSRAVMEQLAPLGPVYQAGTLSGNPVATACGLATLREIAKPGFYDALGARTRALIDGLAGAASAAGVPLCGDTQGGMFGFFLLPQLPQNYPEVLNTDGMRFNTLFHGLLDGGVYIAPALYEAGFVSAAHTEQDIADTVAVARDVFQKL.

The residue at position 274 (Lys274) is an N6-(pyridoxal phosphate)lysine.

The protein belongs to the class-III pyridoxal-phosphate-dependent aminotransferase family. HemL subfamily. In terms of assembly, homodimer. Pyridoxal 5'-phosphate is required as a cofactor.

It is found in the cytoplasm. The catalysed reaction is (S)-4-amino-5-oxopentanoate = 5-aminolevulinate. The protein operates within porphyrin-containing compound metabolism; protoporphyrin-IX biosynthesis; 5-aminolevulinate from L-glutamyl-tRNA(Glu): step 2/2. This is Glutamate-1-semialdehyde 2,1-aminomutase from Acidovorax sp. (strain JS42).